The sequence spans 364 residues: Protein-glutamate methylesterase/protein-glutamine glutaminase (364 aa).

The 119-residue stretch at 5–123 (RVLVVDDTIL…PAANKAALAN (119 aa)) folds into the Response regulatory domain. D56 is subject to 4-aspartylphosphate. The CheB-type methylesterase domain occupies 174–364 (EIVVIGISTG…QEIVHTVKLY (191 aa)). Catalysis depends on residues S181, H208, and D306.

Belongs to the CheB family. Phosphorylated by CheA. Phosphorylation of the N-terminal regulatory domain activates the methylesterase activity.

It localises to the cytoplasm. The catalysed reaction is [protein]-L-glutamate 5-O-methyl ester + H2O = L-glutamyl-[protein] + methanol + H(+). It catalyses the reaction L-glutaminyl-[protein] + H2O = L-glutamyl-[protein] + NH4(+). Its function is as follows. Involved in chemotaxis. Part of a chemotaxis signal transduction system that modulates chemotaxis in response to various stimuli. Catalyzes the demethylation of specific methylglutamate residues introduced into the chemoreceptors (methyl-accepting chemotaxis proteins or MCP) by CheR. Also mediates the irreversible deamidation of specific glutamine residues to glutamic acid. In Desulfotalea psychrophila (strain LSv54 / DSM 12343), this protein is Protein-glutamate methylesterase/protein-glutamine glutaminase.